We begin with the raw amino-acid sequence, 206 residues long: ATP-dependent Clp protease proteolytic subunit (206 aa).

S108 (nucleophile) is an active-site residue. Residue H133 is part of the active site.

Belongs to the peptidase S14 family. As to quaternary structure, fourteen ClpP subunits assemble into 2 heptameric rings which stack back to back to give a disk-like structure with a central cavity, resembling the structure of eukaryotic proteasomes.

Its subcellular location is the cytoplasm. The enzyme catalyses Hydrolysis of proteins to small peptides in the presence of ATP and magnesium. alpha-casein is the usual test substrate. In the absence of ATP, only oligopeptides shorter than five residues are hydrolyzed (such as succinyl-Leu-Tyr-|-NHMec, and Leu-Tyr-Leu-|-Tyr-Trp, in which cleavage of the -Tyr-|-Leu- and -Tyr-|-Trp bonds also occurs).. Functionally, cleaves peptides in various proteins in a process that requires ATP hydrolysis. Has a chymotrypsin-like activity. Plays a major role in the degradation of misfolded proteins. This Chromohalobacter salexigens (strain ATCC BAA-138 / DSM 3043 / CIP 106854 / NCIMB 13768 / 1H11) protein is ATP-dependent Clp protease proteolytic subunit.